The sequence spans 418 residues: Ankyrin repeat domain-containing protein 61 (418 aa).

8 ANK repeats span residues 27 to 57 (ALHS…NQPI), 75 to 104 (ESII…DPEV), 132 to 161 (NRTH…QVNT), 167 to 196 (NKRS…DVNA), 200 to 229 (ASMT…NVNC), 234 to 273 (TGNT…KVNA), 277 to 306 (KGQT…NVNI), and 310 to 343 (NGES…PLRM).

The polypeptide is Ankyrin repeat domain-containing protein 61 (ANKRD61) (Homo sapiens (Human)).